The following is a 649-amino-acid chain: Sulfate transporter 1.1 (649 aa).

A disordered region spans residues 1–20 (MSGTINPPDGGGSGARNPPV). Residues 1 to 86 (MSGTINPPDG…AREYTLRKFR (86 aa)) lie on the Cytoplasmic side of the membrane. The chain crosses the membrane as a helical span at residues 87 to 107 (GDLIAGLTIASLCIPQDIGYA). Topologically, residues 108–111 (KLAN) are extracellular. The helical transmembrane segment at 112 to 132 (VDPKYGLYSSFVPPLIYAGMG) threads the bilayer. Residues 133–136 (SSRD) are Cytoplasmic-facing. A helical membrane pass occupies residues 137–157 (IAIGPVAVVSLLVGTLCQAVI). The Extracellular segment spans residues 158–168 (DPKKNPEDYLR). 2 helical membrane-spanning segments follow: residues 169–189 (LVFT…FLRL) and 190–210 (GFLI…GAAI). Over 211–248 (TIALQQLKGFLGIKTFTKKTDIVSVMHSVFKNAEHGWN) the chain is Extracellular. A helical membrane pass occupies residues 249-269 (WQTIVIGASFLTFLLVTKFIG). At 270-275 (KRNRKL) the chain is on the cytoplasmic side. Residues 276-296 (FWVPAIAPLISVIISTFFVFI) traverse the membrane as a helical segment. Topologically, residues 297–334 (FRADKQGVQIVKHIDQGINPISVHKIFFSGKYFTEGIR) are extracellular. The helical transmembrane segment at 335-355 (IGGIAGMVALTEAVAIARTFA) threads the bilayer. The Cytoplasmic segment spans residues 356 to 367 (AMKDYQIDGNKE). The helical transmembrane segment at 368-388 (MIALGTMNVVGSMTSCYIATG) threads the bilayer. Residues 389–404 (SFSRSAVNFMAGVETA) lie on the Extracellular side of the membrane. Residues 405–425 (VSNIVMAIVVALTLEFITPLF) form a helical membrane-spanning segment. At 426–431 (KYTPNA) the chain is on the cytoplasmic side. Residues 432 to 452 (ILAAIIISAVLGLIDIDAAIL) form a helical membrane-spanning segment. Topologically, residues 453–465 (IWRIDKLDFLACM) are extracellular. Residues 466–486 (GAFLGVIFISVEIGLLIAVVI) traverse the membrane as a helical segment. The Cytoplasmic portion of the chain corresponds to 487–649 (SFAKILLQVT…CSTEVAEQQT (163 aa)). An STAS domain is found at 517-640 (QYPDAAQIPG…LTVGDAVAVC (124 aa)).

Belongs to the SLC26A/SulP transporter (TC 2.A.53) family. Interacts with OASA1 through its STAS domain. Expressed in lateral root cap, root hairs, epidermal and cortical cells of roots.

It localises to the membrane. High-affinity H(+)/sulfate cotransporter that mediates the uptake of the environmental sulfate by plant roots under low-sulfur conditions. Plays a central role in the regulation of sulfate assimilation. This is Sulfate transporter 1.1 (SULTR1;1) from Arabidopsis thaliana (Mouse-ear cress).